An 882-amino-acid polypeptide reads, in one-letter code: DNA mismatch repair protein MutS (882 aa).

An ATP-binding site is contributed by 629-636 (GPNMGGKS).

This sequence belongs to the DNA mismatch repair MutS family.

In terms of biological role, this protein is involved in the repair of mismatches in DNA. It is possible that it carries out the mismatch recognition step. This protein has a weak ATPase activity. In Ralstonia nicotianae (strain ATCC BAA-1114 / GMI1000) (Ralstonia solanacearum), this protein is DNA mismatch repair protein MutS.